The sequence spans 188 residues: Elongation factor P (188 aa).

This sequence belongs to the elongation factor P family.

Its subcellular location is the cytoplasm. Its pathway is protein biosynthesis; polypeptide chain elongation. In terms of biological role, involved in peptide bond synthesis. Stimulates efficient translation and peptide-bond synthesis on native or reconstituted 70S ribosomes in vitro. Probably functions indirectly by altering the affinity of the ribosome for aminoacyl-tRNA, thus increasing their reactivity as acceptors for peptidyl transferase. This chain is Elongation factor P, found in Azotobacter vinelandii (strain DJ / ATCC BAA-1303).